The primary structure comprises 238 residues: Ribonuclease PH (238 aa).

Residues Arg86 and 124–126 (GTR) contribute to the phosphate site.

This sequence belongs to the RNase PH family. As to quaternary structure, homohexameric ring arranged as a trimer of dimers.

The enzyme catalyses tRNA(n+1) + phosphate = tRNA(n) + a ribonucleoside 5'-diphosphate. Phosphorolytic 3'-5' exoribonuclease that plays an important role in tRNA 3'-end maturation. Removes nucleotide residues following the 3'-CCA terminus of tRNAs; can also add nucleotides to the ends of RNA molecules by using nucleoside diphosphates as substrates, but this may not be physiologically important. Probably plays a role in initiation of 16S rRNA degradation (leading to ribosome degradation) during starvation. The chain is Ribonuclease PH from Chelativorans sp. (strain BNC1).